Consider the following 815-residue polypeptide: Phenylalanine--tRNA ligase beta subunit (815 aa).

The region spanning 39–148 (ATELQKFEVA…EYAVVGDNFT (110 aa)) is the tRNA-binding domain. The region spanning 420 to 495 (LQKIPLDFSV…RIYGYDKIES (76 aa)) is the B5 domain. Mg(2+) contacts are provided by D473, D479, E482, and E483. An FDX-ACB domain is found at 721 to 814 (SDFQANFRDY…ISQKFQGTLR (94 aa)).

The protein belongs to the phenylalanyl-tRNA synthetase beta subunit family. Type 1 subfamily. In terms of assembly, tetramer of two alpha and two beta subunits. Requires Mg(2+) as cofactor.

Its subcellular location is the cytoplasm. It carries out the reaction tRNA(Phe) + L-phenylalanine + ATP = L-phenylalanyl-tRNA(Phe) + AMP + diphosphate + H(+). The sequence is that of Phenylalanine--tRNA ligase beta subunit from Rickettsia typhi (strain ATCC VR-144 / Wilmington).